Reading from the N-terminus, the 34-residue chain is Photosystem II reaction center protein Psb30 (34 aa).

The helical transmembrane segment at 6–26 threads the bilayer; it reads VVFQLMALFFVLAAGPAVVVL.

It belongs to the Psb30/Ycf12 family. As to quaternary structure, PSII is composed of 1 copy each of membrane proteins PsbA, PsbB, PsbC, PsbD, PsbE, PsbF, PsbH, PsbI, PsbJ, PsbK, PsbL, PsbM, PsbT, PsbX, PsbY, PsbZ, Psb30/Ycf12, peripheral proteins of the oxygen-evolving complex and a large number of cofactors. It forms dimeric complexes.

Its subcellular location is the plastid. It is found in the chloroplast thylakoid membrane. A core subunit of photosystem II (PSII), probably helps stabilize the reaction center. This Stigeoclonium helveticum (Green alga) protein is Photosystem II reaction center protein Psb30.